Consider the following 573-residue polypeptide: Proton-coupled zinc antiporter SLC30A9, mitochondrial (573 aa).

The disordered stretch occupies residues 66 to 108 (NCSTSGSGKDGSPTRPEEPKTTEKAQAAQPAAKGAGSKPQGLT). The span at 90–104 (AQAAQPAAKGAGSKP) shows a compositional bias: low complexity. Transmembrane regions (helical) follow at residues 244–264 (VVMV…LAWV), 319–339 (GVGI…MGLL), 347–367 (LLWA…TLLV), 397–417 (VVLL…GCMG), and 429–449 (SLGS…LIYT). An LXXLL motif motif is present at residues 467–471 (LTEFL).

This sequence belongs to the cation diffusion facilitator (CDF) transporter (TC 2.A.4) family. SLC30A subfamily.

The protein localises to the mitochondrion membrane. The protein resides in the nucleus. It is found in the endoplasmic reticulum. The catalysed reaction is Zn(2+)(in) + 2 H(+)(out) = Zn(2+)(out) + 2 H(+)(in). Its function is as follows. Mitochondrial proton-coupled zinc ion antiporter mediating the export of zinc from the mitochondria and involved in zinc homeostasis, zinc mobilization as well as mitochondrial morphology and health. In nucleus, may function as a secondary coactivator for nuclear receptors. This chain is Proton-coupled zinc antiporter SLC30A9, mitochondrial (slc30a9), found in Danio rerio (Zebrafish).